The chain runs to 53 residues: ATP synthase protein 8 (53 aa).

A helical transmembrane segment spans residues 10 to 30 (IMVFLVSMALLWAIMTMVFFL).

This sequence belongs to the ATPase protein 8 family. F-type ATPases have 2 components, CF(1) - the catalytic core - and CF(0) - the membrane proton channel.

The protein localises to the mitochondrion membrane. Its function is as follows. Mitochondrial membrane ATP synthase (F(1)F(0) ATP synthase or Complex V) produces ATP from ADP in the presence of a proton gradient across the membrane which is generated by electron transport complexes of the respiratory chain. F-type ATPases consist of two structural domains, F(1) - containing the extramembraneous catalytic core and F(0) - containing the membrane proton channel, linked together by a central stalk and a peripheral stalk. During catalysis, ATP synthesis in the catalytic domain of F(1) is coupled via a rotary mechanism of the central stalk subunits to proton translocation. Part of the complex F(0) domain. Minor subunit located with subunit a in the membrane. This chain is ATP synthase protein 8 (MT-ATP8), found in Artemia franciscana (Brine shrimp).